The sequence spans 315 residues: Acetyl-coenzyme A carboxylase carboxyl transferase subunit alpha (315 aa).

Residues 32–289 (EIDLLEASLE…KQAFVDQLEQ (258 aa)) form the CoA carboxyltransferase C-terminal domain.

The protein belongs to the AccA family. Acetyl-CoA carboxylase is a heterohexamer composed of biotin carboxyl carrier protein (AccB), biotin carboxylase (AccC) and two subunits each of ACCase subunit alpha (AccA) and ACCase subunit beta (AccD).

It is found in the cytoplasm. The catalysed reaction is N(6)-carboxybiotinyl-L-lysyl-[protein] + acetyl-CoA = N(6)-biotinyl-L-lysyl-[protein] + malonyl-CoA. Its pathway is lipid metabolism; malonyl-CoA biosynthesis; malonyl-CoA from acetyl-CoA: step 1/1. Component of the acetyl coenzyme A carboxylase (ACC) complex. First, biotin carboxylase catalyzes the carboxylation of biotin on its carrier protein (BCCP) and then the CO(2) group is transferred by the carboxyltransferase to acetyl-CoA to form malonyl-CoA. The sequence is that of Acetyl-coenzyme A carboxylase carboxyl transferase subunit alpha from Staphylococcus haemolyticus (strain JCSC1435).